Consider the following 170-residue polypeptide: Acetyl-CoA decarbonylase/synthase complex subunit epsilon 1 (170 aa).

The protein belongs to the CdhB family. In terms of assembly, heterotetramer of two alpha and two epsilon subunits. The ACDS complex is made up of alpha, epsilon, beta, gamma and delta subunits with a probable stoichiometry of (alpha(2)epsilon(2))(4)-beta(8)-(gamma(1)delta(1))(8).

It functions in the pathway one-carbon metabolism; methanogenesis from acetate. Its function is as follows. Part of a complex that catalyzes the reversible cleavage of acetyl-CoA, allowing growth on acetate as sole source of carbon and energy. The alpha-epsilon subcomponent functions as a carbon monoxide dehydrogenase. The precise role of the epsilon subunit is unclear; it may have a stabilizing role within the alpha(2)epsilon(2) component and/or be involved in electron transfer to FAD during a potential FAD-mediated CO oxidation. The protein is Acetyl-CoA decarbonylase/synthase complex subunit epsilon 1 (cdhB1) of Methanosarcina thermophila.